The following is a 390-amino-acid chain: Homeobox protein Meis1 (390 aa).

The region spanning 108–192 (GGDVCSSESF…IDLVIDDREG (85 aa)) is the MEIS N-terminal domain. Basic and acidic residues predominate over residues 190-202 (REGGSKSDSEDIT). Residues 190-279 (REGGSKSDSE…KKRHKKRGIF (90 aa)) form a disordered region. A compositionally biased stretch (polar residues) spans 203 to 213 (RSANLTDQPSW). Residues 272–334 (RHKKRGIFPK…NARRRIVQPM (63 aa)) constitute a DNA-binding region (homeobox; TALE-type). The segment at 299–329 (YPSEEQKKQLAQDTGLTILQVNNWFINARRR) is interaction with DNA. A required for transcriptional activation region spans residues 335–390 (IDQSNRAVSQGTPYNPDGQPMGGFVMDGQQHMGIRAPGPMSGMGMNMGMEGQWHYM).

It belongs to the TALE/MEIS homeobox family. In terms of assembly, interacts with the N-terminal region of PBX1 to form a heterodimer which binds DNA including a cAMP-responsive sequence in CYP17. Also forms heterodimers with PBX2. Forms heterotrimers with PBX1 or PBX2 and a number of HOX proteins including HOXA9, HOXD4 and HOXD9 where it acts as a non-DNA-binding partner. Also forms heterotrimers with PBX1 and HOX proteins including HOXD9 and HOXD10 where PBX1 is the non-DNA-binding partner. Heterodimer with DLX3. Heterodimer with HOXB13. In terms of tissue distribution, expressed at low level in normal immunohepatopoietic tissues, including the fetal liver. Expressed in a subset of myeloid leukemia cell lines, with the highest expression seen in those with a megakaryocytic-erythroid phenotype. Also expressed at high levels in the cerebellum.

The protein resides in the nucleus. Acts as a transcriptional regulator of PAX6. Acts as a transcriptional activator of PF4 in complex with PBX1 or PBX2. Required for hematopoiesis, megakaryocyte lineage development and vascular patterning. May function as a cofactor for HOXA7 and HOXA9 in the induction of myeloid leukemias. The protein is Homeobox protein Meis1 (MEIS1) of Homo sapiens (Human).